A 261-amino-acid polypeptide reads, in one-letter code: Pimeloyl-[acyl-carrier protein] methyl ester esterase (261 aa).

The AB hydrolase-1 domain maps to 15–243 (HLVLLHGWGL…AAHAPFISHP (229 aa)). Substrate is bound by residues W22, 83 to 84 (SL), and 144 to 148 (FLALQ). S83 serves as the catalytic Nucleophile. Active-site residues include D208 and H236. H236 contacts substrate.

The protein belongs to the AB hydrolase superfamily. Carboxylesterase BioH family. As to quaternary structure, monomer.

It is found in the cytoplasm. It catalyses the reaction 6-carboxyhexanoyl-[ACP] methyl ester + H2O = 6-carboxyhexanoyl-[ACP] + methanol + H(+). Its pathway is cofactor biosynthesis; biotin biosynthesis. In terms of biological role, the physiological role of BioH is to remove the methyl group introduced by BioC when the pimeloyl moiety is complete. It allows to synthesize pimeloyl-ACP via the fatty acid synthetic pathway through the hydrolysis of the ester bonds of pimeloyl-ACP esters. In Proteus mirabilis (strain HI4320), this protein is Pimeloyl-[acyl-carrier protein] methyl ester esterase.